The primary structure comprises 1079 residues: MLRPRTYVRKLAWRCPRKSQLGLRLATSVSSHKSLPLPMNFDISHSQSAFRAYQDIIHRNKSVGDDEPSQRSENENNPSESDKDSNQDPETPKKDKESENDKEPEKEKDIENDNKVSSESNENVTLASSNTGGAAPPNGNNNGDDPDDSNPSLPVDPVTGLYPPLLAIPMKDRPPLPGRPFAINVTDPEVIRSIYTIIDKREPYFVLFHVKDSNEPDTDVINKKDSVYDIGVHCQIIRHTTPRPGVFNVLGYPLERCKLEELTTPSSEKEAKSEEPSKEDAESFPTSYLKGLNVSYATVKPVEDEPYDKSSAEIRSLVESLKTLLSKMGGKNPLEKLQIKEGTDLISDPSKFADFVGSTIHGDPKKIQEILETLNIETRLSRALELLKVELKASLIKESTIHNLSTKADEYQTRLFIKEFIKELQKRAGISESEDKKTSKFDERLKHLKLTEEAMEAYNAEKAKMENQNEHSSELGVSERYLDWLTSIPWGVYSKDHFNIKQAREVLERDHYGLKDVKDRILEFISLGKVSGKVDGKILCLAGPPGTGKTSIAKSIAESLNRKYVRIAMGGIQDVHEVKGHRRTYVGSIPGRIISALKQAKTSNPLMLIDEIDKLDLSRGGGAASAFLEILDPEQNNSFVDNYIDVKVDLSKVLFVCTANYLGNIPAPLRDRMEIIDVSGYTNNEKIEIAKRHLIPEASKKAGLETNHVSITNETISRLIEKYCRESGLRNVKKLITRIFSKASLKIVEEIEAKEALDSSKEKEGVTASSEEANVNSESTKSNTSQAEPVAESSTDISTKSKVASEKIETKEKKETNKENGQSEEDQQPEPKFVIPEDIKLEITPANLKDYVGPEIYTRDRVYEFPPPGVATGLSYSTSGNGDALYIESILTHSIGSGSGVPGMHVTGSLKDVMKESASIAYSFTKSFMAKNYPDNRFFEAADIHVHCPDGAIPKDGPSAGISFTSSLVSLAINESLPPTVAMTGEITVTGRVLPVGGLREKILGAKRYGCDTIIFPKDIENELEEIPDEVKDGVTFIPVEWYQEVFDKIFPNATAQKCNEVWKEEFAKLDSKKKNKKK.

Residues 1-60 (MLRPRTYVRKLAWRCPRKSQLGLRLATSVSSHKSLPLPMNFDISHSQSAFRAYQDIIHRN) constitute a mitochondrion transit peptide. The span at 61–116 (KSVGDDEPSQRSENENNPSESDKDSNQDPETPKKDKESENDKEPEKEKDIENDNKV) shows a compositional bias: basic and acidic residues. Disordered stretches follow at residues 61 to 158 (KSVG…VDPV) and 262 to 285 (LTTP…ESFP). The span at 117–131 (SSESNENVTLASSNT) shows a compositional bias: polar residues. A compositionally biased stretch (low complexity) spans 132-143 (GGAAPPNGNNNG). Residues 165 to 391 (LLAIPMKDRP…RALELLKVEL (227 aa)) enclose the Lon N-terminal domain. Basic and acidic residues predominate over residues 262-281 (LTTPSSEKEAKSEEPSKEDA). 543–550 (GPPGTGKT) provides a ligand contact to ATP. Residues 756–765 (ALDSSKEKEG) show a composition bias toward basic and acidic residues. The tract at residues 756–832 (ALDSSKEKEG…SEEDQQPEPK (77 aa)) is disordered. Residues 768-779 (ASSEEANVNSES) show a composition bias toward low complexity. The segment covering 780–802 (TKSNTSQAEPVAESSTDISTKSK) has biased composition (polar residues). The span at 803-818 (VASEKIETKEKKETNK) shows a compositional bias: basic and acidic residues. Positions 865-1053 (FPPPGVATGL…QEVFDKIFPN (189 aa)) constitute a Lon proteolytic domain. Active-site residues include Ser959 and Lys1002.

The protein belongs to the peptidase S16 family. As to quaternary structure, homohexamer or homoheptamer. Organized in a ring with a central cavity.

It is found in the mitochondrion matrix. It carries out the reaction Hydrolysis of proteins in presence of ATP.. Its function is as follows. ATP-dependent serine protease that mediates the selective degradation of misfolded, unassembled or oxidatively damaged polypeptides as well as certain short-lived regulatory proteins in the mitochondrial matrix. May also have a chaperone function in the assembly of inner membrane protein complexes. Participates in the regulation of mitochondrial gene expression and in the maintenance of the integrity of the mitochondrial genome. Binds to mitochondrial DNA in a site-specific manner. The chain is Lon protease homolog, mitochondrial from Debaryomyces hansenii (strain ATCC 36239 / CBS 767 / BCRC 21394 / JCM 1990 / NBRC 0083 / IGC 2968) (Yeast).